A 354-amino-acid chain; its full sequence is Glutamine synthetase (354 aa).

The 80-residue stretch at Val22 to Gly101 folds into the GS beta-grasp domain. The GS catalytic domain occupies His108–Lys354.

It belongs to the glutamine synthetase family. As to quaternary structure, homooctamer.

Its subcellular location is the cytoplasm. It carries out the reaction L-glutamate + NH4(+) + ATP = L-glutamine + ADP + phosphate + H(+). The sequence is that of Glutamine synthetase (GLNA) from Suillus bovinus (Jersey cow bolete).